The following is a 312-amino-acid chain: Olfactory receptor 51B5 (312 aa).

Residues 1-23 (MSSSGSSHPFLLTGFPGLEEAHH) lie on the Extracellular side of the membrane. Residues 24-44 (WISVFFLFMYISILFGNGTLL) traverse the membrane as a helical segment. The Cytoplasmic segment spans residues 45 to 52 (LLIKEDHN). The helical transmembrane segment at 53 to 73 (LHEPMYFFLAMLAATDLGLAL) threads the bilayer. Over 74–97 (TTMPTVLGVLWLDHREIGSAACFS) the chain is Extracellular. Cys95 and Cys187 are joined by a disulfide. Residues 98-118 (QAYFIHSLSFLESGILLAMAY) form a helical membrane-spanning segment. Residues 119–137 (DRFIAICNPLRYTSVLTNT) are Cytoplasmic-facing. Residues 138–158 (RVVKIGLGVLMRGFVSVVPPI) traverse the membrane as a helical segment. Over 159-194 (RPLYFFLYCHSHVLSHAFCLHQDVIKLACADTTFNR) the chain is Extracellular. Residues 195 to 215 (LYPAVLVVFIFVLDYLIIFIS) traverse the membrane as a helical segment. The Cytoplasmic portion of the chain corresponds to 216-235 (YVLILKTVLSIASREERAKA). Residues 236 to 256 (LITCVSHICCVLVFYVTVIGL) traverse the membrane as a helical segment. Topologically, residues 257-271 (SLIHRFGKQVPHIVH) are extracellular. A helical transmembrane segment spans residues 272–292 (LIMSYAYFLFPPLMNPITYSV). Residues 293–312 (KTKQIQNAILHLFTTHRIGT) lie on the Cytoplasmic side of the membrane.

This sequence belongs to the G-protein coupled receptor 1 family.

The protein resides in the cell membrane. Odorant receptor. This chain is Olfactory receptor 51B5 (OR51B5), found in Homo sapiens (Human).